The chain runs to 313 residues: Desiccation-related protein PCC13-62 (313 aa).

A signal peptide spans 1–26 (MAQQPTFASAALVSFFLALICSCSYA).

This chain is Desiccation-related protein PCC13-62, found in Craterostigma plantagineum (Blue gem).